Consider the following 197-residue polypeptide: NADH-quinone oxidoreductase subunit C (197 aa).

This sequence belongs to the complex I 30 kDa subunit family. In terms of assembly, NDH-1 is composed of 14 different subunits. Subunits NuoB, C, D, E, F, and G constitute the peripheral sector of the complex.

It is found in the cell inner membrane. It catalyses the reaction a quinone + NADH + 5 H(+)(in) = a quinol + NAD(+) + 4 H(+)(out). NDH-1 shuttles electrons from NADH, via FMN and iron-sulfur (Fe-S) centers, to quinones in the respiratory chain. The immediate electron acceptor for the enzyme in this species is believed to be ubiquinone. Couples the redox reaction to proton translocation (for every two electrons transferred, four hydrogen ions are translocated across the cytoplasmic membrane), and thus conserves the redox energy in a proton gradient. This Neisseria meningitidis serogroup A / serotype 4A (strain DSM 15465 / Z2491) protein is NADH-quinone oxidoreductase subunit C.